Here is a 1384-residue protein sequence, read N- to C-terminus: DNA-directed RNA polymerase subunit beta'' (1384 aa).

Zn(2+)-binding residues include Cys-224, Cys-297, Cys-304, and Cys-307.

The protein belongs to the RNA polymerase beta' chain family. RpoC2 subfamily. As to quaternary structure, in plastids the minimal PEP RNA polymerase catalytic core is composed of four subunits: alpha, beta, beta', and beta''. When a (nuclear-encoded) sigma factor is associated with the core the holoenzyme is formed, which can initiate transcription. Requires Zn(2+) as cofactor.

The protein localises to the plastid. It is found in the chloroplast. The enzyme catalyses RNA(n) + a ribonucleoside 5'-triphosphate = RNA(n+1) + diphosphate. In terms of biological role, DNA-dependent RNA polymerase catalyzes the transcription of DNA into RNA using the four ribonucleoside triphosphates as substrates. The sequence is that of DNA-directed RNA polymerase subunit beta'' from Sinapis alba (White mustard).